The primary structure comprises 689 residues: uncharacterized protein (689 aa).

S566 is a substrate binding site. Y579 (proton acceptor) is an active-site residue.

The protein belongs to the short-chain dehydrogenases/reductases (SDR) family.

This is an uncharacterized protein from Bacillus subtilis (strain 168).